The sequence spans 639 residues: Collagen alpha-1(XII) chain (639 aa).

The region spanning C1–L114 is the VWFA domain. Fibronectin type-III domains are found at residues A130–P219, I220–P310, R311–P401, T402–S490, G491–N585, and L586–L639. The disordered stretch occupies residues D473–Q496.

The protein belongs to the fibril-associated collagens with interrupted helices (FACIT) family. In terms of assembly, trimer of identical chains each containing 190 kDa of non-triple-helical sequences. The triple-helical tail is stabilized by disulfide bonds at each end. Post-translationally, prolines at the third position of the tripeptide repeating unit (G-X-Y) are hydroxylated in some or all of the chains. In terms of processing, O-glycosylated; glycosaminoglycan of chondroitin-sulfate type.

It is found in the secreted. Its subcellular location is the extracellular space. The protein resides in the extracellular matrix. Functionally, type XII collagen interacts with type I collagen-containing fibrils, the COL1 domain could be associated with the surface of the fibrils, and the COL2 and NC3 domains may be localized in the perifibrillar matrix. The chain is Collagen alpha-1(XII) chain (COL12A1) from Oryctolagus cuniculus (Rabbit).